A 281-amino-acid polypeptide reads, in one-letter code: Transcription factor bHLH79 (281 aa).

A disordered region spans residues 47–167; that stretch reads FTRSEHSGNK…GQATDRHSLA (121 aa). Composition is skewed to basic and acidic residues over residues 77-88 and 138-152; these read KTRDLNSEDDSS and TEQK…DYIH. The bHLH domain maps to 159–209; that stretch reads QATDRHSLAERARREKISEKMTALQDIIPGCNKIIGKALVLDEIINYIQSL.

In terms of assembly, homodimer.

The protein localises to the nucleus. The chain is Transcription factor bHLH79 (BHLH79) from Arabidopsis thaliana (Mouse-ear cress).